A 98-amino-acid polypeptide reads, in one-letter code: Citrate lyase acyl carrier protein (98 aa).

At Ser-14 the chain carries O-(phosphoribosyl dephospho-coenzyme A)serine.

Belongs to the CitD family. In terms of assembly, oligomer with a subunit composition of (alpha,beta,gamma)6.

Its subcellular location is the cytoplasm. Its function is as follows. Covalent carrier of the coenzyme of citrate lyase. This is Citrate lyase acyl carrier protein from Escherichia coli O127:H6 (strain E2348/69 / EPEC).